The chain runs to 285 residues: Sulfotransferase 2A2 (285 aa).

Positions 44, 45, 46, 47, 48, and 49 each coordinate 3'-phosphoadenylyl sulfate. The Proton acceptor role is filled by H99. Residues R121, S129, Y184, S218, M223, R247, K248, and G249 each contribute to the 3'-phosphoadenylyl sulfate site.

Belongs to the sulfotransferase 1 family.

It localises to the cytoplasm. It carries out the reaction an alcohol + 3'-phosphoadenylyl sulfate = an alkyl sulfate + adenosine 3',5'-bisphosphate + H(+). Functionally, sulfotransferase that utilizes 3'-phospho-5'-adenylyl sulfate (PAPS) as sulfonate donor to catalyze the sulfate conjugation of a potential wide variety of acceptor molecules bearing a hydroxyl group. Sulfonation increases the water solubility of most compounds, and therefore their renal excretion, but it can also result in bioactivation to form active metabolites. This chain is Sulfotransferase 2A2, found in Mus musculus (Mouse).